Here is a 396-residue protein sequence, read N- to C-terminus: Probable sugar efflux transporter (396 aa).

Helical transmembrane passes span 15–35 (VVTL…PVGL), 50–70 (VGIM…PFML), 81–101 (LICL…AWNF), 103–123 (VLVI…SITA), 136–156 (AQAL…GLPI), 169–189 (TFFA…KLLP), 209–229 (PALM…YTAY), 246–266 (FATV…LVFG), 275–295 (SLVS…LPAA), 301–321 (LAIL…GMQV), 333–353 (VAMA…ALVG), and 364–384 (AIGY…VLIF).

This sequence belongs to the major facilitator superfamily. SotB (TC 2.A.1.2) family.

It is found in the cell inner membrane. In terms of biological role, involved in the efflux of sugars. The physiological role may be the reduction of the intracellular concentration of toxic sugars or sugar metabolites. The polypeptide is Probable sugar efflux transporter (Salmonella schwarzengrund (strain CVM19633)).